Here is a 217-residue protein sequence, read N- to C-terminus: Uracil-DNA glycosylase (217 aa).

Residue Asp-62 is the Proton acceptor of the active site.

It belongs to the uracil-DNA glycosylase (UDG) superfamily. UNG family.

Its subcellular location is the cytoplasm. The catalysed reaction is Hydrolyzes single-stranded DNA or mismatched double-stranded DNA and polynucleotides, releasing free uracil.. Its function is as follows. Excises uracil residues from the DNA which can arise as a result of misincorporation of dUMP residues by DNA polymerase or due to deamination of cytosine. The chain is Uracil-DNA glycosylase from Streptococcus pyogenes serotype M28 (strain MGAS6180).